A 498-amino-acid polypeptide reads, in one-letter code: ATP synthase subunit beta, chloroplastic (498 aa).

Polar residues predominate over residues 1–14; it reads MRTNPTTSRPGVST. The segment at 1–20 is disordered; it reads MRTNPTTSRPGVSTSEEKST. 172 to 179 lines the ATP pocket; sequence GGAGVGKT.

It belongs to the ATPase alpha/beta chains family. F-type ATPases have 2 components, CF(1) - the catalytic core - and CF(0) - the membrane proton channel. CF(1) has five subunits: alpha(3), beta(3), gamma(1), delta(1), epsilon(1). CF(0) has four main subunits: a(1), b(1), b'(1) and c(9-12).

It is found in the plastid. Its subcellular location is the chloroplast thylakoid membrane. It carries out the reaction ATP + H2O + 4 H(+)(in) = ADP + phosphate + 5 H(+)(out). In terms of biological role, produces ATP from ADP in the presence of a proton gradient across the membrane. The catalytic sites are hosted primarily by the beta subunits. This Hordeum vulgare (Barley) protein is ATP synthase subunit beta, chloroplastic.